Reading from the N-terminus, the 283-residue chain is BTB/POZ domain-containing protein KCTD15 (283 aa).

The disordered stretch occupies residues 1–33 (MPHRKERPSGSSLNAHGSSGTAEGGNMSRLSLT). The span at 9–21 (SGSSLNAHGSSGT) shows a compositional bias: polar residues. Phosphoserine occurs at positions 31, 35, and 38. The 71-residue stretch at 56–126 (APVHIDVGGH…LRTSKLLLPD (71 aa)) folds into the BTB domain.

Forms oligomers, predominantly homopentamers. Interacts with KCTD1, probably forming heteropentamers depending on its abundance in a cell-type dependent manner. Interacts with TFAP2A; this interaction inhibits TFAP2A transcriptional activation. Expressed in the cerebral cortex, cerebellum, and hypothalamus (at protein level). Expressed in the arcuate hypothalamic nucleus, the ventromedial hypothalamic nucleus and the accumbens nucleus of the ventral striatum.

The protein resides in the nucleus. During embryonic development, interferes with neural crest formation. Inhibits AP2 transcriptional activity by interaction with its activation domain. The polypeptide is BTB/POZ domain-containing protein KCTD15 (Kctd15) (Mus musculus (Mouse)).